A 200-amino-acid polypeptide reads, in one-letter code: Lipopolysaccharide core heptose(II)-phosphate phosphatase (200 aa).

The N-terminal stretch at 1-25 is a signal peptide; sequence MLAFCRSSLKSKKYFIILLALAAIA.

This sequence belongs to the phosphoglycerate mutase family. Ais subfamily.

It localises to the periplasm. It functions in the pathway bacterial outer membrane biogenesis; lipopolysaccharide metabolism. Its function is as follows. Catalyzes the dephosphorylation of heptose(II) of the outer membrane lipopolysaccharide core. This chain is Lipopolysaccharide core heptose(II)-phosphate phosphatase, found in Escherichia coli O9:H4 (strain HS).